Consider the following 137-residue polypeptide: Protein Turandot X (137 aa).

An N-terminal signal peptide occupies residues 1-24; it reads MKVPVFQLSCLLCLIVCLLCSVKA.

This sequence belongs to the Turandot family.

It is found in the secreted. A humoral factor that may play a role in stress tolerance. In Drosophila persimilis (Fruit fly), this protein is Protein Turandot X.